Here is a 173-residue protein sequence, read N- to C-terminus: NADH-ubiquinone oxidoreductase chain 6 (173 aa).

Transmembrane regions (helical) follow at residues 1–21 (MTYF…AVAS), 27–47 (YGVV…LSLG), 48–68 (ASFV…VVFV), 87–107 (VIGY…ISGF), and 139–159 (WGVG…FVVL).

It belongs to the complex I subunit 6 family.

It localises to the mitochondrion membrane. It carries out the reaction a ubiquinone + NADH + 5 H(+)(in) = a ubiquinol + NAD(+) + 4 H(+)(out). Core subunit of the mitochondrial membrane respiratory chain NADH dehydrogenase (Complex I) that is believed to belong to the minimal assembly required for catalysis. Complex I functions in the transfer of electrons from NADH to the respiratory chain. The immediate electron acceptor for the enzyme is believed to be ubiquinone. The polypeptide is NADH-ubiquinone oxidoreductase chain 6 (MT-ND6) (Brachyramphus marmoratus (Marbled murrelet)).